The sequence spans 190 residues: Glycerol-3-phosphate acyltransferase 2 (190 aa).

5 consecutive transmembrane segments (helical) span residues 1 to 21 (MNIL…ALIV), 53 to 73 (VIVA…PLIL), 76 to 96 (TINP…SVFA), 110 to 130 (VFLF…VLTL), and 152 to 172 (LIFE…SIII).

Belongs to the PlsY family. In terms of assembly, probably interacts with PlsX.

It localises to the cell membrane. It catalyses the reaction an acyl phosphate + sn-glycerol 3-phosphate = a 1-acyl-sn-glycero-3-phosphate + phosphate. Its pathway is lipid metabolism; phospholipid metabolism. Catalyzes the transfer of an acyl group from acyl-phosphate (acyl-PO(4)) to glycerol-3-phosphate (G3P) to form lysophosphatidic acid (LPA). This enzyme utilizes acyl-phosphate as fatty acyl donor, but not acyl-CoA or acyl-ACP. In Bacillus anthracis, this protein is Glycerol-3-phosphate acyltransferase 2.